The sequence spans 144 residues: Large ribosomal subunit protein uL16 (144 aa).

This sequence belongs to the universal ribosomal protein uL16 family. In terms of assembly, part of the 50S ribosomal subunit.

Functionally, binds 23S rRNA and is also seen to make contacts with the A and possibly P site tRNAs. This chain is Large ribosomal subunit protein uL16, found in Natranaerobius thermophilus (strain ATCC BAA-1301 / DSM 18059 / JW/NM-WN-LF).